A 513-amino-acid chain; its full sequence is Cytochrome P450 1A2 (513 aa).

Ser-68 is a glycosylation site (O-linked (GlcNAc) serine). Cys-456 provides a ligand contact to heme.

This sequence belongs to the cytochrome P450 family. In terms of assembly, interacts with PGRMC1; the interaction requires PGRMC1 homodimerization. Heme serves as cofactor.

It is found in the endoplasmic reticulum membrane. It localises to the microsome membrane. It carries out the reaction an organic molecule + reduced [NADPH--hemoprotein reductase] + O2 = an alcohol + oxidized [NADPH--hemoprotein reductase] + H2O + H(+). The enzyme catalyses 17beta-estradiol + reduced [NADPH--hemoprotein reductase] + O2 = 2-hydroxy-17beta-estradiol + oxidized [NADPH--hemoprotein reductase] + H2O + H(+). The catalysed reaction is 17beta-estradiol + reduced [NADPH--hemoprotein reductase] + O2 = 4-hydroxy-17beta-estradiol + oxidized [NADPH--hemoprotein reductase] + H2O + H(+). It catalyses the reaction estrone + reduced [NADPH--hemoprotein reductase] + O2 = 2-hydroxyestrone + oxidized [NADPH--hemoprotein reductase] + H2O + H(+). It carries out the reaction estrone + reduced [NADPH--hemoprotein reductase] + O2 = 4-hydroxyestrone + oxidized [NADPH--hemoprotein reductase] + H2O + H(+). The enzyme catalyses cholesterol + reduced [NADPH--hemoprotein reductase] + O2 = 25-hydroxycholesterol + oxidized [NADPH--hemoprotein reductase] + H2O + H(+). The catalysed reaction is all-trans-retinol + reduced [NADPH--hemoprotein reductase] + O2 = all-trans-retinal + oxidized [NADPH--hemoprotein reductase] + 2 H2O + H(+). It catalyses the reaction all-trans-retinal + reduced [NADPH--hemoprotein reductase] + O2 = all-trans-retinoate + oxidized [NADPH--hemoprotein reductase] + H2O + 2 H(+). It carries out the reaction (5Z,8Z,11Z,14Z)-eicosatetraenoate + reduced [NADPH--hemoprotein reductase] + O2 = (14R,15S)-epoxy-(5Z,8Z,11Z)-eicosatrienoate + oxidized [NADPH--hemoprotein reductase] + H2O + H(+). The enzyme catalyses (5Z,8Z,11Z,14Z)-eicosatetraenoate + reduced [NADPH--hemoprotein reductase] + O2 = (14S,15R)-epoxy-(5Z,8Z,11Z)-eicosatrienoate + oxidized [NADPH--hemoprotein reductase] + H2O + H(+). The catalysed reaction is (5Z,8Z,11Z,14Z,17Z)-eicosapentaenoate + reduced [NADPH--hemoprotein reductase] + O2 = (17R,18S)-epoxy-(5Z,8Z,11Z,14Z)-eicosatetraenoate + oxidized [NADPH--hemoprotein reductase] + H2O + H(+). It catalyses the reaction (4Z,7Z,10Z,13Z,16Z,19Z)-docosahexaenoate + reduced [NADPH--hemoprotein reductase] + O2 = (19R,20S)-epoxy-(4Z,7Z,10Z,13Z,16Z)-docosapentaenoate + oxidized [NADPH--hemoprotein reductase] + H2O + H(+). It carries out the reaction (5S)-hydroperoxy-(6E,8Z,11Z,14Z)-eicosatetraenoate = 5-oxo-(6E,8Z,11Z,14Z)-eicosatetraenoate + H2O. The enzyme catalyses (12S)-hydroperoxy-(5Z,8Z,10E,14Z)-eicosatetraenoate = 12-oxo-(5Z,8Z,10E,14Z)-eicosatetraenoate + H2O. The catalysed reaction is (15S)-hydroperoxy-(5Z,8Z,11Z,13E)-eicosatetraenoate = 15-oxo-(5Z,8Z,11Z,13E)-eicosatetraenoate + H2O. It catalyses the reaction (13S)-hydroperoxy-(9Z,11E)-octadecadienoate = 13-oxo-(9Z,11E)-octadecadienoate + H2O. It carries out the reaction (5Z,8Z,11Z,14Z)-eicosatetraenoate + reduced [NADPH--hemoprotein reductase] + O2 = 13-hydroxy-(5Z,8Z,11Z,14Z)-eicosatetraenoate + oxidized [NADPH--hemoprotein reductase] + H2O + H(+). The enzyme catalyses (5Z,8Z,11Z,14Z)-eicosatetraenoate + reduced [NADPH--hemoprotein reductase] + O2 = 19-hydroxy-(5Z,8Z,11Z,14Z)-eicosatetraenoate + oxidized [NADPH--hemoprotein reductase] + H2O + H(+). The catalysed reaction is (9Z,12Z)-octadecadienoate + reduced [NADPH--hemoprotein reductase] + O2 = 11-hydroxy-(9Z,12Z)-octadecadienoate + oxidized [NADPH--hemoprotein reductase] + H2O + H(+). Its pathway is cofactor metabolism; retinol metabolism. It functions in the pathway steroid metabolism; cholesterol metabolism. It participates in lipid metabolism; arachidonate metabolism. Its function is as follows. A cytochrome P450 monooxygenase involved in the metabolism of various endogenous substrates, including fatty acids, steroid hormones and vitamins. Mechanistically, uses molecular oxygen inserting one oxygen atom into a substrate, and reducing the second into a water molecule, with two electrons provided by NADPH via cytochrome P450 reductase (NADPH--hemoprotein reductase). Catalyzes the hydroxylation of carbon-hydrogen bonds. Exhibits high catalytic activity for the formation of hydroxyestrogens from estrone (E1) and 17beta-estradiol (E2), namely 2-hydroxy E1 and E2. Metabolizes cholesterol toward 25-hydroxycholesterol, a physiological regulator of cellular cholesterol homeostasis. May act as a major enzyme for all-trans retinoic acid biosynthesis in the liver. Catalyzes two successive oxidative transformation of all-trans retinol to all-trans retinal and then to the active form all-trans retinoic acid. Primarily catalyzes stereoselective epoxidation of the last double bond of polyunsaturated fatty acids (PUFA), displaying a strong preference for the (R,S) stereoisomer. Catalyzes bisallylic hydroxylation and omega-1 hydroxylation of PUFA. May also participate in eicosanoids metabolism by converting hydroperoxide species into oxo metabolites (lipoxygenase-like reaction, NADPH-independent). Plays a role in the oxidative metabolism of xenobiotics. Catalyzes the N-hydroxylation of heterocyclic amines and the O-deethylation of phenacetin. Metabolizes caffeine via N3-demethylation. The sequence is that of Cytochrome P450 1A2 (Cyp1a2) from Rattus norvegicus (Rat).